A 205-amino-acid polypeptide reads, in one-letter code: uncharacterized protein (205 aa).

Residues 72-114 (ARVSPYGYESDSENEEYTRISSATSSNVLTDSPTTTQDDPTGR) form a disordered region. Residues 90 to 100 (RISSATSSNVL) are compositionally biased toward polar residues. Low complexity predominate over residues 101–110 (TDSPTTTQDD).

This is an uncharacterized protein from Equus caballus (Horse).